The sequence spans 299 residues: ATP phosphoribosyltransferase (299 aa).

Belongs to the ATP phosphoribosyltransferase family. Long subfamily. Equilibrium between an active dimeric form, an inactive hexameric form and higher aggregates. Interconversion between the various forms is largely reversible and is influenced by the natural substrates and inhibitors of the enzyme. Mg(2+) is required as a cofactor.

The protein localises to the cytoplasm. It carries out the reaction 1-(5-phospho-beta-D-ribosyl)-ATP + diphosphate = 5-phospho-alpha-D-ribose 1-diphosphate + ATP. Its pathway is amino-acid biosynthesis; L-histidine biosynthesis; L-histidine from 5-phospho-alpha-D-ribose 1-diphosphate: step 1/9. Feedback inhibited by histidine. Catalyzes the condensation of ATP and 5-phosphoribose 1-diphosphate to form N'-(5'-phosphoribosyl)-ATP (PR-ATP). Has a crucial role in the pathway because the rate of histidine biosynthesis seems to be controlled primarily by regulation of HisG enzymatic activity. This chain is ATP phosphoribosyltransferase, found in Escherichia coli O17:K52:H18 (strain UMN026 / ExPEC).